A 239-amino-acid chain; its full sequence is tRNA (guanine-N(1)-)-methyltransferase (239 aa).

S-adenosyl-L-methionine contacts are provided by residues Gly115 and 134 to 139 (MGDFVL). The interval 210–239 (QQQREQRTQERRPDLWNRWQQIQNPTPPAP) is disordered. Residues 211-224 (QQREQRTQERRPDL) show a composition bias toward basic and acidic residues.

It belongs to the RNA methyltransferase TrmD family. Homodimer.

The protein localises to the cytoplasm. It carries out the reaction guanosine(37) in tRNA + S-adenosyl-L-methionine = N(1)-methylguanosine(37) in tRNA + S-adenosyl-L-homocysteine + H(+). In terms of biological role, specifically methylates guanosine-37 in various tRNAs. This chain is tRNA (guanine-N(1)-)-methyltransferase, found in Synechococcus sp. (strain CC9311).